We begin with the raw amino-acid sequence, 365 residues long: Putative carbonic anhydrase-like protein 1 (365 aa).

Positions 1 to 25 (MRFECSHFPLFLIILTCHISPLKSS) are cleaved as a signal peptide. The region spanning 28–356 (YQWSYDSDVF…TNNRLVRTNI (329 aa)) is the Alpha-carbonic anhydrase domain. The active site involves Y223. Substrate-binding positions include T295 and 295 to 296 (TS).

This sequence belongs to the alpha-carbonic anhydrase family.

It localises to the secreted. The protein is Putative carbonic anhydrase-like protein 1 (cah-1) of Caenorhabditis elegans.